Reading from the N-terminus, the 115-residue chain is Large ribosomal subunit protein bL31B (115 aa).

The protein belongs to the bacterial ribosomal protein bL31 family. Type B subfamily. In terms of assembly, part of the 50S ribosomal subunit.

The chain is Large ribosomal subunit protein bL31B from Polynucleobacter necessarius subsp. necessarius (strain STIR1).